The chain runs to 341 residues: GDP-fucose transporter 1 (341 aa).

The next 10 helical transmembrane spans lie at 17–37, 41–61, 71–91, 103–123, 132–152, 156–176, 187–207, 231–251, 260–280, and 283–303; these read LVIG…LAIT, YPGL…YLLG, FTWD…LAIF, DTFI…DTVF, LTFL…ATDS, LTAY…MVYI, IWGL…VFWF, AFSS…FGFA, AFTV…VLIW, and HATP…VGYQ. Residues 316 to 341 are disordered; sequence SEKDSEKGEEDEELTQLVPGKLASVV.

Belongs to the nucleotide-sugar transporter family. GDP-Mannose:GMP antiporter (GMA) (TC 2.A.7.13) subfamily. In terms of tissue distribution, ubiquitous.

Its subcellular location is the golgi apparatus membrane. Acts as the major nucleotide-sugar transporter for the import of GDP-Fucose into the Golgi lumen. Transports GDP-Fucose in a strict counter-exchange mode. Is required for proper plant growth and development. Also acts as a GDP-mannose transporter that may be involved in the import of GDP-mannose from the cytoplasm into the Golgi lumen. The protein is GDP-fucose transporter 1 of Arabidopsis thaliana (Mouse-ear cress).